We begin with the raw amino-acid sequence, 140 residues long: Hemoglobin subunit alpha-D (140 aa).

Positions 1-140 (MLTDSDKKLV…VCTVLAEKYR (140 aa)) constitute a Globin domain. 2 residues coordinate heme b: His57 and His86.

This sequence belongs to the globin family. Heterotetramer of two alpha-D chains and two beta chains. In terms of tissue distribution, red blood cells.

Functionally, involved in oxygen transport from the lung to the various peripheral tissues. The sequence is that of Hemoglobin subunit alpha-D (HBAD) from Columba livia (Rock dove).